The sequence spans 255 residues: 5'-nucleotidase SurE (255 aa).

Residues Asp8, Asp9, Ser39, and Asn91 each coordinate a divalent metal cation.

Belongs to the SurE nucleotidase family. Requires a divalent metal cation as cofactor.

It localises to the cytoplasm. The enzyme catalyses a ribonucleoside 5'-phosphate + H2O = a ribonucleoside + phosphate. Nucleotidase that shows phosphatase activity on nucleoside 5'-monophosphates. This is 5'-nucleotidase SurE from Acinetobacter baumannii (strain ATCC 17978 / DSM 105126 / CIP 53.77 / LMG 1025 / NCDC KC755 / 5377).